The following is a 205-amino-acid chain: ATP phosphoribosyltransferase (205 aa).

This sequence belongs to the ATP phosphoribosyltransferase family. Short subfamily. In terms of assembly, heteromultimer composed of HisG and HisZ subunits.

Its subcellular location is the cytoplasm. The catalysed reaction is 1-(5-phospho-beta-D-ribosyl)-ATP + diphosphate = 5-phospho-alpha-D-ribose 1-diphosphate + ATP. Its pathway is amino-acid biosynthesis; L-histidine biosynthesis; L-histidine from 5-phospho-alpha-D-ribose 1-diphosphate: step 1/9. Catalyzes the condensation of ATP and 5-phosphoribose 1-diphosphate to form N'-(5'-phosphoribosyl)-ATP (PR-ATP). Has a crucial role in the pathway because the rate of histidine biosynthesis seems to be controlled primarily by regulation of HisG enzymatic activity. This Helicobacter hepaticus (strain ATCC 51449 / 3B1) protein is ATP phosphoribosyltransferase.